Here is a 148-residue protein sequence, read N- to C-terminus: Transcriptional regulator MraZ (148 aa).

2 SpoVT-AbrB domains span residues 5–53 and 82–125; these read ETAI…AESE and AAHL…SEQA.

Belongs to the MraZ family. Forms oligomers.

It localises to the cytoplasm. The protein localises to the nucleoid. The polypeptide is Transcriptional regulator MraZ (Stenotrophomonas maltophilia (strain R551-3)).